The chain runs to 432 residues: N-acylneuraminate cytidylyltransferase (432 aa).

Positions 39, 49, 98, 107, 109, and 130 each coordinate substrate. Residue Arg188 is part of the active site.

Belongs to the CMP-NeuNAc synthase family. Homotetramer; the active enzyme is formed by a dimer of dimers. As to expression, expressed in testis, ovary and liver.

It localises to the nucleus. The enzyme catalyses an N-acylneuraminate + CTP = a CMP-N-acyl-beta-neuraminate + diphosphate. Its pathway is amino-sugar metabolism; N-acetylneuraminate metabolism. In terms of biological role, catalyzes the activation of N-acetylneuraminic acid (NeuNAc) to cytidine 5'-monophosphate N-acetylneuraminic acid (CMP-NeuNAc), a substrate required for the addition of sialic acid. In Oncorhynchus mykiss (Rainbow trout), this protein is N-acylneuraminate cytidylyltransferase (cmas).